Here is a 615-residue protein sequence, read N- to C-terminus: 1-deoxy-D-xylulose-5-phosphate synthase (615 aa).

Residues His-72 and 113–115 each bind thiamine diphosphate; that span reads GHA. A Mg(2+)-binding site is contributed by Asp-144. Thiamine diphosphate is bound by residues 145–146, Asn-173, Tyr-281, and Glu-360; that span reads GA. Asn-173 is a Mg(2+) binding site.

The protein belongs to the transketolase family. DXPS subfamily. Homodimer. The cofactor is Mg(2+). Thiamine diphosphate is required as a cofactor.

It catalyses the reaction D-glyceraldehyde 3-phosphate + pyruvate + H(+) = 1-deoxy-D-xylulose 5-phosphate + CO2. The protein operates within metabolic intermediate biosynthesis; 1-deoxy-D-xylulose 5-phosphate biosynthesis; 1-deoxy-D-xylulose 5-phosphate from D-glyceraldehyde 3-phosphate and pyruvate: step 1/1. In terms of biological role, catalyzes the acyloin condensation reaction between C atoms 2 and 3 of pyruvate and glyceraldehyde 3-phosphate to yield 1-deoxy-D-xylulose-5-phosphate (DXP). The chain is 1-deoxy-D-xylulose-5-phosphate synthase from Thermus thermophilus (strain ATCC 27634 / DSM 579 / HB8).